A 211-amino-acid polypeptide reads, in one-letter code: Probable GTP-binding protein EngB (211 aa).

One can recognise an EngB-type G domain in the interval 30 to 204 (EGFEVAFAGR…YTVLADWMEL (175 aa)). GTP contacts are provided by residues 38–45 (GRSNAGKS), 64–68 (GRTQL), 82–85 (DLPG), 149–152 (TKAD), and 182–185 (LFSA). Residues S45 and T66 each coordinate Mg(2+).

This sequence belongs to the TRAFAC class TrmE-Era-EngA-EngB-Septin-like GTPase superfamily. EngB GTPase family. Mg(2+) is required as a cofactor.

Functionally, necessary for normal cell division and for the maintenance of normal septation. This chain is Probable GTP-binding protein EngB, found in Pseudomonas savastanoi pv. phaseolicola (strain 1448A / Race 6) (Pseudomonas syringae pv. phaseolicola (strain 1448A / Race 6)).